The primary structure comprises 513 residues: MGTGKKEKQRRIREGNTKDGNLRVKGENFYRDTKRVQFLNMYKGGRSVRNAKGDIIKAAPLQDTAAPTARVAPDRRWFGNTRVISQDSLSHFREALGENKRDSYQVLLRRNKLPMSLLNEKDSAESPTAKILETEPFEQTFGPKAQRKKPRIAASSLEELISSTSTDNKTFEEKQELDSTLGLMGKQEEEDGWTQAAKEAIFHKGQSKRIWNELYKVIDSSDVVIHVLDARDPLGTRCKSVTDYMTNETPHKHLIYVLNKCDLVPTWVAAAWVKHLSKERPTLAFHASITNSFGKGSLIQLLRQFSQLHKDRHQISVGFIGYPNTGKSSIINTLRKKKVCQVAPIPGETKVWQYITLMKRIFLIDCPGIVPPSSKDSEEDILFRGVVRVEHVSHPEQYIPGILKRCKRQHLERTYEISGWKDSVDFIEMIARKQGRLLKGGEPDESGVSKQILNDFNRGKIPWFVPPPEKDKIEEKEPGDKKRPAEENQEDQEEEEKEQEEQEEPVSKKAKKE.

The interval 1-23 is disordered; sequence MGTGKKEKQRRIREGNTKDGNLR. Residues 211–372 form the CP-type G domain; the sequence is WNELYKVIDS…LIDCPGIVPP (162 aa). Residues 321–328 and 365–369 contribute to the GTP site; these read GYPNTGKS and DCPGI. The interval 459 to 513 is disordered; the sequence is GKIPWFVPPPEKDKIEEKEPGDKKRPAEENQEDQEEEEKEQEEQEEPVSKKAKKE. Basic and acidic residues predominate over residues 468-486; that stretch reads PEKDKIEEKEPGDKKRPAE. Positions 487–504 are enriched in acidic residues; sequence ENQEDQEEEEKEQEEQEE.

The protein belongs to the TRAFAC class YlqF/YawG GTPase family. NOG2 subfamily.

Its subcellular location is the nucleus. It is found in the nucleolus. In terms of biological role, GTPase that associates with pre-60S ribosomal subunits in the nucleolus and is required for their nuclear export and maturation. The chain is Nucleolar GTP-binding protein 2 (NOG2) from Kluyveromyces lactis (strain ATCC 8585 / CBS 2359 / DSM 70799 / NBRC 1267 / NRRL Y-1140 / WM37) (Yeast).